Consider the following 319-residue polypeptide: Carbonic anhydrase, chloroplastic (319 aa).

The transit peptide at 1–98 directs the protein to the chloroplast; it reads MSTINGCLTS…AASKVAQITS (98 aa).

It belongs to the beta-class carbonic anhydrase family. As to quaternary structure, homohexamer.

It localises to the plastid. Its subcellular location is the chloroplast stroma. The enzyme catalyses hydrogencarbonate + H(+) = CO2 + H2O. Its function is as follows. Reversible hydration of carbon dioxide. The protein is Carbonic anhydrase, chloroplastic of Spinacia oleracea (Spinach).